Consider the following 206-residue polypeptide: Thymidylate kinase (206 aa).

An ATP-binding site is contributed by 11–18; sequence GIDGAGKT.

It belongs to the thymidylate kinase family.

It carries out the reaction dTMP + ATP = dTDP + ADP. Functionally, phosphorylation of dTMP to form dTDP in both de novo and salvage pathways of dTTP synthesis. The polypeptide is Thymidylate kinase (Burkholderia ambifaria (strain MC40-6)).